The sequence spans 382 residues: V-type proton ATPase subunit C 1 (382 aa).

An N-acetylthreonine modification is found at Thr-2.

Belongs to the V-ATPase C subunit family. V-ATPase is a heteromultimeric enzyme made up of two complexes: the ATP-hydrolytic V1 complex and the proton translocation V0 complex. The V1 complex consists of three catalytic AB heterodimers that form a heterohexamer, three peripheral stalks each consisting of EG heterodimers, one central rotor including subunits D and F, and the regulatory subunits C and H. The proton translocation complex V0 consists of the proton transport subunit a, a ring of proteolipid subunits c9c'', rotary subunit d, subunits e and f, and two accessory subunits.

Functionally, subunit of the V1 complex of vacuolar(H+)-ATPase (V-ATPase), a multisubunit enzyme composed of a peripheral complex (V1) that hydrolyzes ATP and a membrane integral complex (V0) that translocates protons. V-ATPase is responsible for acidifying and maintaining the pH of intracellular compartments and in some cell types, is targeted to the plasma membrane, where it is responsible for acidifying the extracellular environment. Subunit C is necessary for the assembly of the catalytic sector of the enzyme and is likely to have a specific function in its catalytic activity. The sequence is that of V-type proton ATPase subunit C 1 (atp6v1c1) from Xenopus tropicalis (Western clawed frog).